Consider the following 307-residue polypeptide: Murein tetrapeptide carboxypeptidase (307 aa).

Ser115 serves as the catalytic Nucleophile. Residues Glu217 and His285 each act as charge relay system in the active site.

It belongs to the peptidase S66 family. As to quaternary structure, homodimer.

The protein resides in the cytoplasm. The enzyme catalyses N-acetyl-D-glucosaminyl-N-acetylmuramoyl-L-alanyl-meso-2,6-diaminoheptanedioyl-D-alanine + H2O = N-acetyl-D-glucosaminyl-N-acetylmuramoyl-L-alanyl-meso-2,6-diaminoheptanedioate + D-alanine. Its pathway is cell wall biogenesis; peptidoglycan recycling. In terms of biological role, releases the terminal D-alanine residue from the cytoplasmic disaccharide-tetrapeptide GlcNAc-MurNAc-L-Ala-gamma-D-Glu-meso-Dap-D-Ala, which is a murein turnover product. Probably also act on free tetrapetide. May be involved in murein recycling. This Pseudomonas aeruginosa (strain ATCC 15692 / DSM 22644 / CIP 104116 / JCM 14847 / LMG 12228 / 1C / PRS 101 / PAO1) protein is Murein tetrapeptide carboxypeptidase.